The sequence spans 290 residues: 33 kDa chaperonin (290 aa).

2 disulfide bridges follow: Cys231-Cys233 and Cys263-Cys266.

It belongs to the HSP33 family. Under oxidizing conditions two disulfide bonds are formed involving the reactive cysteines. Under reducing conditions zinc is bound to the reactive cysteines and the protein is inactive.

The protein localises to the cytoplasm. Functionally, redox regulated molecular chaperone. Protects both thermally unfolding and oxidatively damaged proteins from irreversible aggregation. Plays an important role in the bacterial defense system toward oxidative stress. The chain is 33 kDa chaperonin from Thermotoga maritima (strain ATCC 43589 / DSM 3109 / JCM 10099 / NBRC 100826 / MSB8).